Here is a 232-residue protein sequence, read N- to C-terminus: 2-C-methyl-D-erythritol 4-phosphate cytidylyltransferase (232 aa).

Belongs to the IspD/TarI cytidylyltransferase family. IspD subfamily.

It carries out the reaction 2-C-methyl-D-erythritol 4-phosphate + CTP + H(+) = 4-CDP-2-C-methyl-D-erythritol + diphosphate. The protein operates within isoprenoid biosynthesis; isopentenyl diphosphate biosynthesis via DXP pathway; isopentenyl diphosphate from 1-deoxy-D-xylulose 5-phosphate: step 2/6. In terms of biological role, catalyzes the formation of 4-diphosphocytidyl-2-C-methyl-D-erythritol from CTP and 2-C-methyl-D-erythritol 4-phosphate (MEP). This Shewanella frigidimarina (strain NCIMB 400) protein is 2-C-methyl-D-erythritol 4-phosphate cytidylyltransferase.